The sequence spans 268 residues: Tryptophan synthase alpha chain (268 aa).

Residues Glu-49 and Asp-60 each act as proton acceptor in the active site.

Belongs to the TrpA family. Tetramer of two alpha and two beta chains.

The catalysed reaction is (1S,2R)-1-C-(indol-3-yl)glycerol 3-phosphate + L-serine = D-glyceraldehyde 3-phosphate + L-tryptophan + H2O. It participates in amino-acid biosynthesis; L-tryptophan biosynthesis; L-tryptophan from chorismate: step 5/5. In terms of biological role, the alpha subunit is responsible for the aldol cleavage of indoleglycerol phosphate to indole and glyceraldehyde 3-phosphate. The sequence is that of Tryptophan synthase alpha chain from Haemophilus influenzae (strain ATCC 51907 / DSM 11121 / KW20 / Rd).